A 279-amino-acid chain; its full sequence is MALKTFNPVTPSLRQLVIVDRSDLYKGKPLKQLTEGKSSSGGRNNNGRITVRFRGGGHKQTYRIIDFKRRKLDVAAKVERIEYDPNRTSFIALIRYADGEQSYIIAPQRLSVGDEVVSSQQADVKPGNAMPLASMPVGTIVHNIEMKIGKGGAMVRSAGTFAQVVGRDQGYVIIRLNSGEQRLIHGQCFATVGAVSNPDHMNASIGKAGRSRWLGRRPHNRGVTMNPVDHPHGGGEGRTSGGRHPVTPWGKPTKGKKTRSNKSTTKFIVTSRHKSKKKG.

The disordered stretch occupies residues 202 to 279 (NASIGKAGRS…TSRHKSKKKG (78 aa)). Basic residues predominate over residues 209 to 220 (GRSRWLGRRPHN).

This sequence belongs to the universal ribosomal protein uL2 family. As to quaternary structure, part of the 50S ribosomal subunit. Forms a bridge to the 30S subunit in the 70S ribosome.

One of the primary rRNA binding proteins. Required for association of the 30S and 50S subunits to form the 70S ribosome, for tRNA binding and peptide bond formation. It has been suggested to have peptidyltransferase activity; this is somewhat controversial. Makes several contacts with the 16S rRNA in the 70S ribosome. This Methylocella silvestris (strain DSM 15510 / CIP 108128 / LMG 27833 / NCIMB 13906 / BL2) protein is Large ribosomal subunit protein uL2.